A 748-amino-acid chain; its full sequence is Translation factor GUF1 homolog 1, mitochondrial (748 aa).

Residues 1–29 (MRVGCCLLLKPIRQRLCTASISSRHIMRW) constitute a mitochondrion transit peptide. The tr-type G domain occupies 94 to 276 (SHIRNFAVVA…AIIERVPPPT (183 aa)). Residues 103-110 (AHVDHGKT), 167-171 (DTPGH), and 221-224 (TKMD) each bind GTP.

The protein belongs to the TRAFAC class translation factor GTPase superfamily. Classic translation factor GTPase family. LepA subfamily.

Its subcellular location is the mitochondrion inner membrane. The enzyme catalyses GTP + H2O = GDP + phosphate + H(+). Functionally, promotes mitochondrial protein synthesis. May act as a fidelity factor of the translation reaction, by catalyzing a one-codon backward translocation of tRNAs on improperly translocated ribosomes. Binds to mitochondrial ribosomes in a GTP-dependent manner. The protein is Translation factor GUF1 homolog 1, mitochondrial of Trypanosoma cruzi (strain CL Brener).